Reading from the N-terminus, the 174-residue chain is Transcription antitermination protein NusB (174 aa).

A disordered region spans residues 1-28 (MVEPKKPFMRKPPPKTGDKKPGDRKANR). Positions 16-25 (TGDKKPGDRK) are enriched in basic and acidic residues.

It belongs to the NusB family.

Its function is as follows. Involved in transcription antitermination. Required for transcription of ribosomal RNA (rRNA) genes. Binds specifically to the boxA antiterminator sequence of the ribosomal RNA (rrn) operons. This chain is Transcription antitermination protein NusB, found in Rhodopseudomonas palustris (strain BisB5).